Reading from the N-terminus, the 130-residue chain is uncharacterized protein (130 aa).

It belongs to the HesB/IscA family.

This is an uncharacterized protein from Buchnera aphidicola subsp. Acyrthosiphon pisum (strain APS) (Acyrthosiphon pisum symbiotic bacterium).